The chain runs to 380 residues: NF-kappa-B inhibitor-like protein 1 (380 aa).

The segment at 1–34 is disordered; it reads MSNPSPQVPEGEASTSVCRPKSSMASTSRRQRRE. The span at 13–28 shows a compositional bias: polar residues; sequence ASTSVCRPKSSMASTS. ANK repeat units follow at residues 64–93 and 97–133; these read GQPP…DPAH and HGDT…IKNK. Disordered regions lie at residues 131–167 and 185–293; these read KNKD…EWRQ and EDDA…RGSL. Position 150 is a phosphoserine (Ser150). The segment covering 150–159 has biased composition (acidic residues); that stretch reads SAEEEEEDEA. Basic and acidic residues-rich tracts occupy residues 204-221 and 236-272; these read RMAR…ETEG and RQQE…RDPV.

As to quaternary structure, interacts with CACTIN (via N-terminal domain); the interaction occurs in a pro-inflammatory-independent manner.

It localises to the nucleus. Its function is as follows. Involved in the regulation of innate immune response. Acts as negative regulator of Toll-like receptor and interferon-regulatory factor (IRF) signaling pathways. Contributes to the negative regulation of transcriptional activation of NF-kappa-B target genes in response to endogenous pro-inflammatory stimuli. In Sus scrofa (Pig), this protein is NF-kappa-B inhibitor-like protein 1 (NFKBIL1).